A 427-amino-acid chain; its full sequence is Membrane-bound hydrogenase subunit alpha (427 aa).

Cys68, Cys71, Cys374, and Cys377 together coordinate Ni(2+).

The protein belongs to the complex I 49 kDa subunit family. As to quaternary structure, the membrane-bound hydrogenase complex is composed of MbhK and MbhL, and may also contain MbhJ. Ni(2+) serves as cofactor.

Its subcellular location is the cell membrane. It catalyses the reaction H2 + 2 oxidized [2Fe-2S]-[ferredoxin] = 2 reduced [2Fe-2S]-[ferredoxin] + 2 H(+). Its activity is regulated as follows. Inhibited by 0.1 mM Cu(2+). In terms of biological role, alpha subunit of a hydrogen-evolving hydrogenase that utilizes protons both as a substrate for hydrogen production and proton translocation. Acts by coupling the redox reaction via ferredoxin and iron-sulfur (Fe-S) clusters to proton translocation across the membrane thereby conserving the redox energy in a proton gradient. The chain is Membrane-bound hydrogenase subunit alpha from Pyrococcus furiosus (strain ATCC 43587 / DSM 3638 / JCM 8422 / Vc1).